We begin with the raw amino-acid sequence, 596 residues long: Aspartate--tRNA(Asp/Asn) ligase (596 aa).

Glu175 is a binding site for L-aspartate. Residues 199–202 (QQYK) form an aspartate region. The L-aspartate site is built by Arg221 and His454. 221 to 223 (RDE) provides a ligand contact to ATP. Residue Glu488 participates in ATP binding. Residue Arg495 participates in L-aspartate binding. An ATP-binding site is contributed by 540–543 (GVDR).

The protein belongs to the class-II aminoacyl-tRNA synthetase family. Type 1 subfamily. In terms of assembly, homodimer.

It is found in the cytoplasm. It carries out the reaction tRNA(Asx) + L-aspartate + ATP = L-aspartyl-tRNA(Asx) + AMP + diphosphate. In terms of biological role, aspartyl-tRNA synthetase with relaxed tRNA specificity since it is able to aspartylate not only its cognate tRNA(Asp) but also tRNA(Asn). Reaction proceeds in two steps: L-aspartate is first activated by ATP to form Asp-AMP and then transferred to the acceptor end of tRNA(Asp/Asn). This is Aspartate--tRNA(Asp/Asn) ligase from Bartonella bacilliformis (strain ATCC 35685 / KC583 / Herrer 020/F12,63).